The following is a 164-amino-acid chain: Transcription elongation factor GreA (164 aa).

A coiled-coil region spans residues 50 to 76; sequence YHAAREEQGQQEARIRQLQELLNNAKV.

Belongs to the GreA/GreB family.

Functionally, necessary for efficient RNA polymerase transcription elongation past template-encoded arresting sites. The arresting sites in DNA have the property of trapping a certain fraction of elongating RNA polymerases that pass through, resulting in locked ternary complexes. Cleavage of the nascent transcript by cleavage factors such as GreA or GreB allows the resumption of elongation from the new 3'terminus. GreA releases sequences of 2 to 3 nucleotides. This is Transcription elongation factor GreA from Mycolicibacterium smegmatis (strain ATCC 700084 / mc(2)155) (Mycobacterium smegmatis).